Consider the following 186-residue polypeptide: MSARDVISKGEAKMKKSIESFQHEIASVRTGKATTALLDRVKVDAYGQQMPLKQVGNVGVQDAHTLMVQVWDKSMVAATEKAIRDANLGLNPAAEGQSIRVSIPPLTEERRKEYVKLTRKYSEDSKVALRNLRREILHALDKLEKDKQISEDEKSRGKKDADDLVHKYEKRILDIVGQKEKEIMEV.

This sequence belongs to the RRF family.

It localises to the cytoplasm. Its function is as follows. Responsible for the release of ribosomes from messenger RNA at the termination of protein biosynthesis. May increase the efficiency of translation by recycling ribosomes from one round of translation to another. This is Ribosome-recycling factor from Prosthecochloris aestuarii (strain DSM 271 / SK 413).